The following is a 121-amino-acid chain: Anther-specific protein SF2 (121 aa).

A signal peptide spans 1–21 (MANNSVSYLVLLLLVFVLAIS). An N-linked (GlcNAc...) asparagine glycan is attached at Asn115.

Epidermal anther cells.

Its subcellular location is the secreted. It is found in the cell wall. Functionally, anther-specific cell wall protein which could contribute to the cell wall architecture of epidermal anther cells via intermolecular disulfide bridges. In Helianthus annuus (Common sunflower), this protein is Anther-specific protein SF2.